Here is a 317-residue protein sequence, read N- to C-terminus: Transaldolase 2 (317 aa).

The Schiff-base intermediate with substrate role is filled by lysine 132.

It belongs to the transaldolase family. Type 1 subfamily. Homodimer.

The protein resides in the cytoplasm. The enzyme catalyses D-sedoheptulose 7-phosphate + D-glyceraldehyde 3-phosphate = D-erythrose 4-phosphate + beta-D-fructose 6-phosphate. The protein operates within carbohydrate degradation; pentose phosphate pathway; D-glyceraldehyde 3-phosphate and beta-D-fructose 6-phosphate from D-ribose 5-phosphate and D-xylulose 5-phosphate (non-oxidative stage): step 2/3. Transaldolase is important for the balance of metabolites in the pentose-phosphate pathway. This Pectobacterium atrosepticum (strain SCRI 1043 / ATCC BAA-672) (Erwinia carotovora subsp. atroseptica) protein is Transaldolase 2.